Here is a 283-residue protein sequence, read N- to C-terminus: DegV domain-containing protein CPE0304 (283 aa).

One can recognise a DegV domain in the interval 3–281; sequence VKVITDSTSC…VKSVGIAYAR (279 aa). Hexadecanoate is bound by residues S60 and S92.

Its function is as follows. May bind long-chain fatty acids, such as palmitate, and may play a role in lipid transport or fatty acid metabolism. The sequence is that of DegV domain-containing protein CPE0304 from Clostridium perfringens (strain 13 / Type A).